The chain runs to 2540 residues: Probable JmjC domain-containing histone demethylation protein 2C (2540 aa).

Positions 278–309 (TRAQANSPRPAMNSQAAVPKQNTHQQQQQRSI) are enriched in polar residues. Positions 278–478 (TRAQANSPRP…TVSDHNSNDL (201 aa)) are disordered. 2 positions are modified to phosphoserine: Ser-317 and Ser-320. Basic and acidic residues predominate over residues 323 to 342 (DEEKMKEEKYDYISRGENPK). Residues 343–353 (GKNKHLMNKRR) show a composition bias toward basic residues. Residues 354–371 (KPEEDEKKLNMKRLRTDN) are compositionally biased toward basic and acidic residues. Phosphoserine occurs at positions 373 and 376. Residues 373-382 (SDFSESSDSE) are compositionally biased toward low complexity. Basic and acidic residues-rich tracts occupy residues 383-403 (NSNKRIIDNSSEQKPENELKN), 410-427 (NGEEGKPHNNEKAGEETL), and 438-452 (QEDKKHEEAEKRKSV). Positions 464–478 (SSEQSTVSDHNSNDL) are enriched in polar residues. Phosphoserine is present on residues Ser-475 and Ser-501. The residue at position 505 (Thr-505) is a Phosphothreonine. Phosphoserine is present on residues Ser-601, Ser-617, Ser-638, Ser-639, Ser-641, Ser-652, and Ser-943. Positions 631 to 656 (VDTHKIKSSPSPEVVKPKITHSPDSV) are disordered. 2 disordered regions span residues 1242–1263 (GKVQESQKPPTLIPEPKDSQAN) and 1614–1692 (NRRK…NSNT). Basic residues predominate over residues 1643–1652 (KRQPKPTYKK). The span at 1653–1669 (KQNDLQKRKGEIEEDLK) shows a compositional bias: basic and acidic residues. The C6-type zinc-finger motif lies at 1846–1871 (CDACEATLFNIHWVCQKCGFVVCLDC). Residues 1971-1991 (PESQQQNTPPKSEKNGGSSPE) show a composition bias toward polar residues. A disordered region spans residues 1971–2064 (PESQQQNTPP…LVSQNNEQGS (94 aa)). Ser-1989 bears the Phosphoserine mark. Basic and acidic residues predominate over residues 2016–2043 (AEQKAREEKKENKELTLENQIKEEREQD). Polar residues predominate over residues 2045 to 2064 (SESPNGRTSPLVSQNNEQGS). An LXXLL motif motif is present at residues 2066-2070 (LRDLL). Residues Lys-2132 and Lys-2136 each participate in a glycyl lysine isopeptide (Lys-Gly) (interchain with G-Cter in SUMO2) cross-link. Residues 2274–2498 (MPARYEDLLK…ESFHLTQELR (225 aa)) enclose the JmjC domain. Residues His-2336, Glu-2338, and His-2466 each contribute to the Fe cation site.

It belongs to the JHDM2 histone demethylase family. In terms of assembly, interacts specifically with the ligand-binding domain of the thyroid receptor (TR). Requires the presence of thyroid hormone for its interaction. Fe(2+) serves as cofactor.

It localises to the nucleus. Functionally, probable histone demethylase that specifically demethylates 'Lys-9' of histone H3, thereby playing a central role in histone code. Demethylation of Lys residue generates formaldehyde and succinate. May be involved in hormone-dependent transcriptional activation, by participating in recruitment to androgen-receptor target genes. This Homo sapiens (Human) protein is Probable JmjC domain-containing histone demethylation protein 2C (JMJD1C).